Reading from the N-terminus, the 183-residue chain is DELTA-miturgitoxin-Cp1c (183 aa).

Positions 1–20 (MKFSLFFSVFFLAVLHACLS) are cleaved as a signal peptide. Residues 21–47 (ESEIDLEDEEHFMSSDSFLSEIQDESR) constitute a propeptide that is removed on maturation. The short motif at 44–47 (DESR) is the Processing quadruplet motif element. 8 cysteine pairs are disulfide-bonded: C51–C66, C58–C75, C65–C88, C77–C86, C115–C130, C122–C139, C129–C157, and C141–C155. A predicted alpha-helix region spans residues 164-177 (QAIEGALRIAKKLI). Residue W181 is modified to Tryptophan amide.

Belongs to the neurotoxin 19 (CSTX) family. Double-CSTX subfamily. Cleavage of the propeptide depends on the processing quadruplet motif (XXXR, with at least one of X being E). Expressed by the venom gland.

The protein resides in the secreted. It is found in the target cell membrane. Functionally, spider venom toxin that exhibits cytolytic activity by forming an alpha-helix across the membrane. Lethal to insect larvae. Causes instant paralysis and death in the larvae of the flesh fly (S.carnaria) at doses of 20 ug/g, at doses of less than 10 ug/g causes reversible paralysis. Has cytolytic activity against insect Sf9 cells. Causes stable and irreversible depolarization of fly muscle fibers, leading to contracture at higher toxin concentrations. Destabilizes membranes. This Cheiracanthium punctorium (Yellow sac spider) protein is DELTA-miturgitoxin-Cp1c.